A 197-amino-acid polypeptide reads, in one-letter code: Crossover junction endodeoxyribonuclease RuvC (197 aa).

Catalysis depends on residues aspartate 7, glutamate 68, and aspartate 141. Residues aspartate 7, glutamate 68, and aspartate 141 each coordinate Mg(2+). Low complexity-rich tracts occupy residues 165–181 (AAPA…TPAR) and 188–197 (APARRPAGAS). Residues 165–197 (AAPAAPVSRPAPATPARRSPRPAAPARRPAGAS) are disordered.

Belongs to the RuvC family. As to quaternary structure, homodimer which binds Holliday junction (HJ) DNA. The HJ becomes 2-fold symmetrical on binding to RuvC with unstacked arms; it has a different conformation from HJ DNA in complex with RuvA. In the full resolvosome a probable DNA-RuvA(4)-RuvB(12)-RuvC(2) complex forms which resolves the HJ. Mg(2+) is required as a cofactor.

It localises to the cytoplasm. It catalyses the reaction Endonucleolytic cleavage at a junction such as a reciprocal single-stranded crossover between two homologous DNA duplexes (Holliday junction).. Functionally, the RuvA-RuvB-RuvC complex processes Holliday junction (HJ) DNA during genetic recombination and DNA repair. Endonuclease that resolves HJ intermediates. Cleaves cruciform DNA by making single-stranded nicks across the HJ at symmetrical positions within the homologous arms, yielding a 5'-phosphate and a 3'-hydroxyl group; requires a central core of homology in the junction. The consensus cleavage sequence is 5'-(A/T)TT(C/G)-3'. Cleavage occurs on the 3'-side of the TT dinucleotide at the point of strand exchange. HJ branch migration catalyzed by RuvA-RuvB allows RuvC to scan DNA until it finds its consensus sequence, where it cleaves and resolves the cruciform DNA. This is Crossover junction endodeoxyribonuclease RuvC from Frankia alni (strain DSM 45986 / CECT 9034 / ACN14a).